Reading from the N-terminus, the 91-residue chain is Probable Fe(2+)-trafficking protein (91 aa).

Belongs to the Fe(2+)-trafficking protein family. As to quaternary structure, monomer.

In terms of biological role, could be a mediator in iron transactions between iron acquisition and iron-requiring processes, such as synthesis and/or repair of Fe-S clusters in biosynthetic enzymes. This chain is Probable Fe(2+)-trafficking protein, found in Klebsiella pneumoniae (strain 342).